We begin with the raw amino-acid sequence, 156 residues long: MPRRRVVGQRKILPDPKFNSELLAKFINVIMQDGKKSTAEKIIYKALDVVAEKKGEEHLVILEAALDNVRPTVEVKSRRVGGSTYQVPCEVRPVRRNALAMRWLVEAARKRGEKSMALRLAGEMLDAAENKGTAVKKREDVHRMAEANKAFAHYRW.

It belongs to the universal ribosomal protein uS7 family. As to quaternary structure, part of the 30S ribosomal subunit. Contacts proteins S9 and S11.

Functionally, one of the primary rRNA binding proteins, it binds directly to 16S rRNA where it nucleates assembly of the head domain of the 30S subunit. Is located at the subunit interface close to the decoding center, probably blocks exit of the E-site tRNA. The protein is Small ribosomal subunit protein uS7 of Shewanella loihica (strain ATCC BAA-1088 / PV-4).